Here is a 132-residue protein sequence, read N- to C-terminus: uncharacterized protein (132 aa).

The N-terminal stretch at 1 to 17 is a signal peptide; that stretch reads MCPECFFLMLFFCGYRA. Over residues 25–39 the composition is skewed to low complexity; that stretch reads SSSSSSSSSSSFRSS. Positions 25–79 are disordered; that stretch reads SSSSSSSSSSSFRSSPAYGFSGRPPGGAGCRERSQRSCLRPGGLPSLTRNPGLQR.

This is an uncharacterized protein from Escherichia coli (strain K12).